The sequence spans 439 residues: GTPase Der (439 aa).

EngA-type G domains follow at residues 2–167 (PTVL…ESKG) and 182–358 (IRVS…KSLH). Residues 8-15 (GKSNVGKS), 55-59 (DTGGI), 118-121 (NKSE), 188-195 (GRPNAGKS), 235-239 (DTAGL), and 301-304 (NKID) contribute to the GTP site. A KH-like domain is found at 359–439 (YRVQTSAVNS…PIFLKFKSRH (81 aa)).

It belongs to the TRAFAC class TrmE-Era-EngA-EngB-Septin-like GTPase superfamily. EngA (Der) GTPase family. As to quaternary structure, associates with the 50S ribosomal subunit.

GTPase that plays an essential role in the late steps of ribosome biogenesis. The polypeptide is GTPase Der (Thermosipho africanus (strain TCF52B)).